We begin with the raw amino-acid sequence, 565 residues long: uncharacterized protein (565 aa).

10 helical membrane passes run 28-48 (IFHF…LPFA), 73-93 (ASYG…DTGL), 109-129 (VLAI…FLVW), 169-189 (LFLF…FYFI), 262-282 (IVIQ…YPVL), 315-335 (LIVT…VITS), 364-384 (SLIF…FGVI), 393-413 (VFPW…AMFI), 461-481 (AFLV…LLPL), and 526-546 (TLGL…LTFV).

Belongs to the TrkH potassium transport family.

Its subcellular location is the cell membrane. This is an uncharacterized protein from Mycoplasma pneumoniae (strain ATCC 29342 / M129 / Subtype 1) (Mycoplasmoides pneumoniae).